The chain runs to 391 residues: 1-deoxy-D-xylulose 5-phosphate reductoisomerase (391 aa).

Asn-109 provides a ligand contact to NADPH. A 1-deoxy-D-xylulose 5-phosphate-binding site is contributed by Lys-110. Position 111 (Glu-111) interacts with NADPH. Residue Asp-135 coordinates Mn(2+). 1-deoxy-D-xylulose 5-phosphate-binding residues include Ser-136, Glu-137, Ser-171, and His-194. Residue Glu-137 coordinates Mn(2+). An NADPH-binding site is contributed by Gly-200. Ser-207, Asn-212, Arg-213, and Glu-216 together coordinate 1-deoxy-D-xylulose 5-phosphate. Glu-216 lines the Mn(2+) pocket.

The protein belongs to the DXR family. As to quaternary structure, homodimer. Mg(2+) is required as a cofactor. Mn(2+) serves as cofactor.

The catalysed reaction is 2-C-methyl-D-erythritol 4-phosphate + NADP(+) = 1-deoxy-D-xylulose 5-phosphate + NADPH + H(+). The protein operates within isoprenoid biosynthesis; isopentenyl diphosphate biosynthesis via DXP pathway; isopentenyl diphosphate from 1-deoxy-D-xylulose 5-phosphate: step 1/6. Its function is as follows. Catalyzes the NADPH-dependent rearrangement and reduction of 1-deoxy-D-xylulose-5-phosphate (DXP) to 2-C-methyl-D-erythritol 4-phosphate (MEP). The polypeptide is 1-deoxy-D-xylulose 5-phosphate reductoisomerase (Blochmanniella floridana).